The sequence spans 422 residues: Enolase (422 aa).

Residue glutamine 161 participates in (2R)-2-phosphoglycerate binding. The active-site Proton donor is the glutamate 203. Residues aspartate 240, glutamate 283, and aspartate 310 each coordinate Mg(2+). Residues lysine 335, arginine 364, serine 365, and lysine 386 each coordinate (2R)-2-phosphoglycerate. Lysine 335 (proton acceptor) is an active-site residue.

This sequence belongs to the enolase family. Mg(2+) is required as a cofactor.

The protein resides in the cytoplasm. Its subcellular location is the secreted. The protein localises to the cell surface. The enzyme catalyses (2R)-2-phosphoglycerate = phosphoenolpyruvate + H2O. It participates in carbohydrate degradation; glycolysis; pyruvate from D-glyceraldehyde 3-phosphate: step 4/5. In terms of biological role, catalyzes the reversible conversion of 2-phosphoglycerate (2-PG) into phosphoenolpyruvate (PEP). It is essential for the degradation of carbohydrates via glycolysis. The protein is Enolase of Deinococcus deserti (strain DSM 17065 / CIP 109153 / LMG 22923 / VCD115).